A 337-amino-acid polypeptide reads, in one-letter code: Fructose-1,6-bisphosphatase class 1 (337 aa).

Residues E89, D112, L114, and D115 each contribute to the Mg(2+) site. Substrate contacts are provided by residues 115 to 118, N208, Y241, and K271; that span reads DGSS. A Mg(2+)-binding site is contributed by E277.

Belongs to the FBPase class 1 family. In terms of assembly, homotetramer. Requires Mg(2+) as cofactor.

It is found in the cytoplasm. The catalysed reaction is beta-D-fructose 1,6-bisphosphate + H2O = beta-D-fructose 6-phosphate + phosphate. It functions in the pathway carbohydrate biosynthesis; gluconeogenesis. In Psychromonas ingrahamii (strain DSM 17664 / CCUG 51855 / 37), this protein is Fructose-1,6-bisphosphatase class 1.